A 518-amino-acid chain; its full sequence is Dihydropyrimidinase 2 (518 aa).

Residues His-59, His-61, and Lys-152 each coordinate Zn(2+). Position 152 is an N6-carboxylysine (Lys-152). Tyr-157 lines the substrate pocket. Zn(2+)-binding residues include His-185 and His-241. A substrate-binding site is contributed by Ser-291. Position 319 (Asp-319) interacts with Zn(2+). Asn-340 contributes to the substrate binding site.

It belongs to the metallo-dependent hydrolases superfamily. Hydantoinase/dihydropyrimidinase family. Homotetramer. It depends on Zn(2+) as a cofactor. Post-translationally, carboxylation allows a single lysine to coordinate two zinc ions.

It carries out the reaction 5,6-dihydrouracil + H2O = 3-(carbamoylamino)propanoate + H(+). In Caenorhabditis briggsae, this protein is Dihydropyrimidinase 2 (dhp-2).